Here is a 175-residue protein sequence, read N- to C-terminus: SsrA-binding protein (175 aa).

Disordered stretches follow at residues 1-29 and 152-175; these read MTRN…ERDA and KRET…SRKS.

The protein belongs to the SmpB family.

Its subcellular location is the cytoplasm. Its function is as follows. Required for rescue of stalled ribosomes mediated by trans-translation. Binds to transfer-messenger RNA (tmRNA), required for stable association of tmRNA with ribosomes. tmRNA and SmpB together mimic tRNA shape, replacing the anticodon stem-loop with SmpB. tmRNA is encoded by the ssrA gene; the 2 termini fold to resemble tRNA(Ala) and it encodes a 'tag peptide', a short internal open reading frame. During trans-translation Ala-aminoacylated tmRNA acts like a tRNA, entering the A-site of stalled ribosomes, displacing the stalled mRNA. The ribosome then switches to translate the ORF on the tmRNA; the nascent peptide is terminated with the 'tag peptide' encoded by the tmRNA and targeted for degradation. The ribosome is freed to recommence translation, which seems to be the essential function of trans-translation. The protein is SsrA-binding protein of Koribacter versatilis (strain Ellin345).